Consider the following 262-residue polypeptide: 14-3-3 protein homolog (262 aa).

The protein belongs to the 14-3-3 family.

The chain is 14-3-3 protein homolog from Trichoderma harzianum (Hypocrea lixii).